The primary structure comprises 115 residues: UPF0102 protein NMCC_2054 (115 aa).

The protein belongs to the UPF0102 family.

The chain is UPF0102 protein NMCC_2054 from Neisseria meningitidis serogroup C (strain 053442).